The primary structure comprises 5762 residues: Mucin-5B (5762 aa).

The signal sequence occupies residues 1–25; it reads MGAPSACRTLVLALAAMLVVPQAET. Positions 27-50 are disordered; the sequence is GPVEPSWENAGHTMDGGAPTSSPT. A VWFD 1 domain is found at 75-245; it reads RVCSTWGDFH…KLDGPTEQCP (171 aa). 2 cysteine pairs are disulfide-bonded: Cys-77–Cys-207 and Cys-99–Cys-244. An N-linked (GlcNAc...) asparagine glycan is attached at Asn-145. Glu-194 contacts Cu(2+). N-linked (GlcNAc...) asparagine glycans are attached at residues Asn-201 and Asn-254. Cu(2+)-binding residues include His-311 and His-358. One can recognise a TIL 1 domain in the interval 329-385; it reads CPLNMQHQECGSPCTDTCSNPQRAQLCEDHCVDGCFCPPGTVLDDITHSGCLPLGQC. Asn-401 carries N-linked (GlcNAc...) asparagine glycosylation. A VWFD 2 domain is found at 423–598; it reads GTCSVQGGAH…NTWKAQAACA (176 aa). Cystine bridges form between Cys-425–Cys-562, Cys-447–Cys-597, and Cys-469–Cys-477. An N-linked (GlcNAc...) asparagine glycan is attached at Asn-515. TIL domains are found at residues 695–752 and 805–855; these read CPKS…AQEC and NSSA…EEDC. N-linked (GlcNAc...) asparagine glycosylation occurs at Asn-805. The 73-residue stretch at 855–927 folds into the VWFC 1 domain; the sequence is CPCVHNEATY…EYILAQDYCG (73 aa). A VWFD 3 domain is found at 893 to 1062; that stretch reads GTCVAYGDGH…NSWKLSPSCP (170 aa). 4 cysteine pairs are disulfide-bonded: Cys-895-Cys-1026, Cys-917-Cys-1061, Cys-926-Cys-1023, and Cys-944-Cys-951. Residue Asn-929 is glycosylated (N-linked (GlcNAc...) asparagine). 2 N-linked (GlcNAc...) asparagine glycosylation sites follow: Asn-1276 and Asn-1292. One copy of the Cys-rich subdomain 1 repeat lies at 1333-1432; it reads CVREVCRWSS…RVLCCEYVPC (100 aa). A 7 X Cys-rich subdomain repeats region spans residues 1333–4228; it reads CVREVCRWSS…RVFCCNYGHC (2896 aa). Trp-1340 carries C-linked (Man) tryptophan glycosylation. 2 disordered regions span residues 1437–1462 and 1480–1502; these read APGTSPQPSLSASTEPAVPTPTQTTA and LTSQTGSSSGPVTVTPSAPGTTT. A compositionally biased stretch (low complexity) spans 1450 to 1462; it reads TEPAVPTPTQTTA. One copy of the Cys-rich subdomain 2 repeat lies at 1503–1604; it reads CQPRCQWTEW…VLCCSDDHCR (102 aa). A C-linked (Man) tryptophan glycan is attached at Trp-1509. Residue Asn-1556 is glycosylated (N-linked (GlcNAc...) asparagine). A disordered region spans residues 1607 to 1783; sequence ATTPPPTTEL…NTTTSQGTTR (177 aa). The segment covering 1614 to 1624 has biased composition (low complexity); that stretch reads TELETATTTTT. 2 stretches are compositionally biased toward polar residues: residues 1625-1638 and 1645-1662; these read QALFSTPQPTSSPG and ASTTAVPTLSEGLTSPRY. Over residues 1663–1684 the composition is skewed to low complexity; the sequence is TSTLGTATTGGPTTPAGSTEPT. Polar residues predominate over residues 1689 to 1706; the sequence is ATSTLPTRSALPGTTGSL. Composition is skewed to low complexity over residues 1739–1756 and 1765–1777; these read EPLTTSLAPTLTSELSTS and TETTMSPLTNTTT. Asn-1774 carries N-linked (GlcNAc...) asparagine glycosylation. One copy of the Cys-rich subdomain 3 repeat lies at 1784 to 1885; sequence CQPKCEWTEW…VLCCDDYSHC (102 aa). C-linked (Man) tryptophan glycosylation is present at Trp-1790. Residues 1890–1987 show a composition bias toward low complexity; that stretch reads ATSSTATPSS…TSVTPIPSSS (98 aa). Disordered stretches follow at residues 1890-2019, 2031-2100, 2114-2211, and 2242-2302; these read ATSS…TAHT, GATG…GTTH, TGSM…HTVR, and TGTT…SSPT. The 11 X approximate tandem repeats, Ser/Thr-rich stretch occupies residues 1890-2199; the sequence is ATSSTATPSS…VPNTMATTHG (310 aa). Positions 1988-1997 are enriched in polar residues; the sequence is LGTTWTRLSQ. Low complexity predominate over residues 1998–2019; that stretch reads TTTPTATMSTATPSSTPETAHT. Over residues 2114 to 2181 the composition is skewed to low complexity; the sequence is TGSMATPSSS…TSNTVTPSSA (68 aa). Residues 2182–2199 show a composition bias toward polar residues; it reads LGTTHTPPVPNTMATTHG. One copy of the Cys-rich subdomain 4 repeat lies at 2313–2414; the sequence is GCEPQCAWSE…RVFCCNYGHC (102 aa). The C-linked (Man) tryptophan glycan is linked to Trp-2320. The interval 2419–2756 is 11 X approximate tandem repeats, Ser/Thr-rich; sequence ATSSTAMPSS…VPNTTATTHG (338 aa). 3 disordered regions span residues 2443 to 2462, 2473 to 2522, and 2556 to 2861; these read ATTTESTGSTATPSSTPGTT, TVTV…ATAL, and TTPT…PTSA. Residues 2556-2738 show a composition bias toward low complexity; sequence TTPTATMSTA…TSSTVTPSSA (183 aa). A compositionally biased stretch (polar residues) spans 2739–2786; the sequence is LGTTHTPPVPNTTATTHGRSLSPSSPHTVRTAWTSATSGTLGTTHITE. Asn-2749 carries an N-linked (GlcNAc...) asparagine glycan. The span at 2787–2861 shows a compositional bias: low complexity; the sequence is PSTGTSHTPA…TLLPSSPTSA (75 aa). Residues 2854-2886 form an HAT 1 repeat; it reads LPSSPTSAPITTVVTMGCEPQCAWSEWLDYSYP. One copy of the Cys-rich subdomain 5 repeat lies at 2871 to 2971; it reads CEPQCAWSEW…RVFCCNYGHC (101 aa). The C-linked (Man) tryptophan glycan is linked to Trp-2877. A 17 X approximate tandem repeats, Ser/Thr-rich region spans residues 2976-3456; sequence ATSSTATPSS…VPNTTATTHG (481 aa). 2 stretches are compositionally biased toward low complexity: residues 3001-3017 and 3026-3049; these read TTTATTGSTAIPSSTPG and TSTATTPTATSSKATSSSSPRTAT. Disordered regions lie at residues 3001–3049, 3256–3357, 3371–3469, and 3481–3561; these read TTTA…RTAT, TTPT…GTTH, TGSM…TVRT, and TTHI…PTSA. Residues 3371–3438 show a composition bias toward low complexity; the sequence is TGSMATPSSS…TSSTVTPSSA (68 aa). Residues 3439–3456 show a composition bias toward polar residues; that stretch reads LGTTHTPPVPNTTATTHG. Residue Asn-3449 is glycosylated (N-linked (GlcNAc...) asparagine). The span at 3487 to 3561 shows a compositional bias: low complexity; it reads PSTVTSHTPA…TLLPSSPTSA (75 aa). An HAT 2 repeat occupies 3554 to 3586; sequence LPSSPTSAPITTVVTTGCEPQCAWSEWLDYSYP. A Cys-rich subdomain 6 repeat occupies 3571–3671; it reads CEPQCAWSEW…RVFCCNYGHC (101 aa). C-linked (Man) tryptophan glycosylation is present at Trp-3577. The 11 X approximate tandem repeats, Ser/Thr-rich stretch occupies residues 3676 to 4013; that stretch reads ATSSTATPSS…VPNTTATTHG (338 aa). 3 disordered regions span residues 3699-3779, 3813-3917, and 3956-4118; these read TATT…ATAL, TTPT…HTPT, and ATGS…PTSA. Low complexity predominate over residues 3956-3995; it reads ATGSTTNPSSTPGTTPIPPVLTTTATTPAATSSTVTPSSA. Polar residues predominate over residues 3996-4043; sequence LGTTHTPPVPNTTATTHGRSLSPSSPHTVRTAWTSATSGTLGTTHITE. The N-linked (GlcNAc...) asparagine glycan is linked to Asn-4006. The span at 4044 to 4118 shows a compositional bias: low complexity; that stretch reads PSTGTSHTPA…TLLPSSPTSA (75 aa). The stretch at 4111–4143 is one HAT 3 repeat; it reads LPSSPTSAPITTVVTTGCEPQCAWSEWLDYSYP. The Cys-rich subdomain 7 repeat unit spans residues 4128 to 4228; it reads CEPQCAWSEW…RVFCCNYGHC (101 aa). A glycan (C-linked (Man) tryptophan) is linked at Trp-4134. Positions 4233–4879 are 23 X approximate tandem repeats, Ser/Thr-rich; that stretch reads ATSSTAMPSS…TLGTAHTPKV (647 aa). Composition is skewed to low complexity over residues 4259–4274 and 4283–4389; these read TTASTGSTATPSSTPG and TSPA…PGTT. Disordered regions lie at residues 4259–4389, 4428–4447, 4458–4527, and 4541–4750; these read TTAS…PGTT, ATTTASTGSTATPSSTPGTT, TVTV…AIPS, and TTPT…ATSF. Residues Asn-4804, Asn-4960, Asn-5017, Asn-5024, Asn-5046, Asn-5096, and Asn-5111 are each glycosylated (N-linked (GlcNAc...) asparagine). One can recognise a VWFD 4 domain in the interval 5073–5261; the sequence is CICSMWGGSH…VPDSRKDGCW (189 aa). Disulfide bonds link Cys-5075–Cys-5221, Cys-5097–Cys-5260, and Cys-5121–Cys-5132. Asn-5215 carries N-linked (GlcNAc...) asparagine glycosylation. One can recognise a VWFC 2 domain in the interval 5412–5484; sequence CPCVGPDGFP…NPCCPETVCV (73 aa). N-linked (GlcNAc...) asparagine glycosylation is found at Asn-5486, Asn-5526, Asn-5565, Asn-5566, Asn-5602, Asn-5612, Asn-5663, Asn-5677, and Asn-5721. The 67-residue stretch at 5521–5587 folds into the VWFC 3 domain; the sequence is QLCSYNGTFY…VAGQCCGECV (67 aa). Disulfide bonds link Cys-5653-Cys-5705, Cys-5672-Cys-5719, Cys-5681-Cys-5735, and Cys-5685-Cys-5737. The region spanning 5653–5742 is the CTCK domain; it reads CEEDSCQVRI…DECGCTPFCV (90 aa).

In terms of assembly, homomultimer; disulfide-linked. The N- and C-terminus mediate their assembly into higher order structures to form filaments. The CTCK domains of two polypeptides associate in the endoplasmic reticulum to generate intermolecularly disulfide-bonded dimers. These dimers progress to the Golgi apparatus, which is a more acidic environment than the endoplasmic reticulum. Under acidic conditions, the N-termini form non-covalent intermolecular interactions that juxtapose assemblies from different CTCK-linked dimers to produce long, disulfide-linked polymers that remain highly compact until secretion. In terms of processing, highly glycosylated. C-, N- and O-glycosylated. C-mannosylated in the Cys-rich subdomains probably on the first Trp residue of the WXXW motif. Highly O-glycosylated in the Ser/Thr-rich tandem repeat (TR) region. The repeat region is about 59% O-glycosylated with a high abundance of NeuAc(2)Hex(1)HexNac1-ol. As to expression, expressed on surface airway epithelia. Expressed mainly in mucous cells of submucosal glands of airway tissues. Highly expressed in the sublingual gland. Also found in submaxillary glands, endocervix, gall bladder, and pancreas.

The protein resides in the secreted. Functionally, gel-forming mucin that is thought to contribute to the lubricating and viscoelastic properties of whole saliva and cervical mucus. In Homo sapiens (Human), this protein is Mucin-5B (MUC5B).